The following is a 384-amino-acid chain: Putative glutamate--cysteine ligase 2-1 (384 aa).

This sequence belongs to the glutamate--cysteine ligase type 2 family. YbdK subfamily.

The catalysed reaction is L-cysteine + L-glutamate + ATP = gamma-L-glutamyl-L-cysteine + ADP + phosphate + H(+). ATP-dependent carboxylate-amine ligase which exhibits weak glutamate--cysteine ligase activity. This is Putative glutamate--cysteine ligase 2-1 from Paenarthrobacter aurescens (strain TC1).